Consider the following 156-residue polypeptide: MTIMLTPMQTEEFRSYLTYTTKHYAEEKVKAGTWLPEDAQLLSKQVFTDLLPRGLETPHHHLWSLKLNEKDIVGWLWIHAEPEHPQQEAFIYDFGLYEPYRGKGYAKQALAALDQAARSMGIRKLSLHVFAHNQTARKLYEQTGFQETDVVMSKKL.

The 146-residue stretch at 11 to 156 (EEFRSYLTYT…ETDVVMSKKL (146 aa)) folds into the N-acetyltransferase domain.

Belongs to the acetyltransferase family. As to quaternary structure, homodimer.

This is an uncharacterized protein from Bacillus subtilis (strain 168).